The following is a 341-amino-acid chain: Small ribosomal subunit protein uS3 (341 aa).

One can recognise a KH type-2 domain in the interval 38-106 (IRRMMTRGME…QVQLNILEVK (69 aa)). Disordered stretches follow at residues 224–246 (RAVRGRSARREQPAAESPALETA) and 274–341 (PAGQ…TKEG). Low complexity-rich tracts occupy residues 285–303 (AEQPVVTAEPAAAAAVTGE) and 311–333 (AAPAEPTTSAAAEEAPGGADAPS).

The protein belongs to the universal ribosomal protein uS3 family. In terms of assembly, part of the 30S ribosomal subunit. Forms a tight complex with proteins S10 and S14.

In terms of biological role, binds the lower part of the 30S subunit head. Binds mRNA in the 70S ribosome, positioning it for translation. In Acidothermus cellulolyticus (strain ATCC 43068 / DSM 8971 / 11B), this protein is Small ribosomal subunit protein uS3.